A 1043-amino-acid chain; its full sequence is Sarcoplasmic/endoplasmic reticulum calcium ATPase 2 (1043 aa).

At 1–48 (MENAHTKTVEEVLGHFGVNESTGLSLEQVKKLKERWGSNELPAEEGKT) the chain is on the cytoplasmic side. A Phosphoserine modification is found at Ser38. A helical membrane pass occupies residues 49–69 (LLELVIEQFEDLLVRILLLAA). Over 70 to 89 (CISFVLAWFEEGEETITAFV) the chain is Lumenal. Residues 90–110 (EPFVILLILVANAIVGVWQER) form a helical membrane-spanning segment. At 111–253 (NAENAIEALK…QERTPLQQKL (143 aa)) the chain is on the cytoplasmic side. A helical transmembrane segment spans residues 254-273 (DEFGEQLSKVISLICIAVWI). The Lumenal portion of the chain corresponds to 274–295 (INIGHFNDPVHGGSWIRGAIYY). Residues Tyr294 and Tyr295 each carry the 3'-nitrotyrosine modification. The chain crosses the membrane as a helical span at residues 296–313 (FKIAVALAVAAIPEGLPA). Ca(2+) contacts are provided by Val304, Ala305, Ile307, and Glu309. Residues 314 to 756 (VITTCLALGT…EEGRAIYNNM (443 aa)) lie on the Cytoplasmic side of the membrane. The 4-aspartylphosphate intermediate role is filled by Asp351. Mg(2+)-binding residues include Asp351 and Thr353. Thr353 is a binding site for ATP. At Thr441 the chain carries Phosphothreonine. ATP contacts are provided by Glu442, Arg489, and Lys514. Ser531 carries the phosphoserine modification. Arg559 lines the ATP pocket. The tract at residues 575–594 (MHLEDSANFIKYETNLTFVG) is interaction with HAX1. Ser580 is modified (phosphoserine). ATP is bound by residues Thr624, Gly625, and Asp626. Residues Ser661 and Ser663 each carry the phosphoserine modification. Arg677 and Lys683 together coordinate ATP. Asp702 serves as a coordination point for Mg(2+). Position 705 (Asn705) interacts with ATP. A helical transmembrane segment spans residues 757–776 (KQFIRYLISSNVGEVVCIFL). Residues Asn767 and Glu770 each coordinate Ca(2+). At 777-786 (TAALGFPEAL) the chain is on the lumenal side. The chain crosses the membrane as a helical span at residues 787 to 807 (IPVQLLWVNLVTDGLPATALG). The segment at 787–807 (IPVQLLWVNLVTDGLPATALG) is interaction with PLN. Positions 788–1043 (PVQLLWVNLV…DTNFSDMFWS (256 aa)) are interaction with TMEM64 and PDIA3. Positions 795, 798, and 799 each coordinate Ca(2+). Over 808–827 (FNPPDLDIMNKPPRNPKEPL) the chain is Cytoplasmic. The helical transmembrane segment at 828–850 (ISGWLFFRYLAIGCYVGAATVGA) threads the bilayer. At 851-896 (AAWWFIAADGGPRVSFYQLSHFLQCKEDNPDFEGVDCAIFESPYPM) the chain is on the lumenal side. Cys875 and Cys887 are disulfide-bonded. A helical membrane pass occupies residues 897-916 (TMALSVLVTIEMCNALNSLS). Position 907 (Glu907) interacts with Ca(2+). At 917–929 (ENQSLLRMPPWEN) the chain is on the cytoplasmic side. A helical transmembrane segment spans residues 930-948 (IWLVGSICLSMSLHFLILY). Positions 931-942 (WLVGSICLSMSL) are interaction with PLN. The Lumenal portion of the chain corresponds to 949 to 963 (VEPLPLIFQITPLNL). Residues 964–984 (TQWLMVLKISLPVILMDETLK) form a helical membrane-spanning segment. The Cytoplasmic segment spans residues 985–1043 (FVARNYLEPGKECAQPATKPSCSLSACTDGISWPFVLLIMPLVVWVYSTDTNFSDMFWS).

Belongs to the cation transport ATPase (P-type) (TC 3.A.3) family. Type IIA subfamily. As to quaternary structure, interacts with sarcolipin (SLN); the interaction inhibits ATP2A2 Ca(2+) affinity. Interacts with phospholamban (PLN); the interaction inhibits ATP2A2 Ca(2+) affinity. Interacts with myoregulin (MRLN). Interacts with ARLN and ERLN; the interactions inhibit ATP2A2 Ca(2+) affinity. Interacts with STRIT1/DWORF; the interaction results in activation of ATP2A2. Interacts with the monomeric forms of SLN, PLN, ARLN, ERLN and STRI1/DWORF. Interacts with HAX1. Interacts with S100A8 and S100A9. Interacts with SLC35G1 and STIM1. Interacts with TMEM203. Interacts with TMEM64 and PDIA3. Interacts with TMX1. Interacts with TMX2. Interacts with VMP1; VMP1 competes with PLN and SLN to prevent them from forming an inhibitory complex with ATP2A2. Interacts with ULK1. Interacts with S100A1 in a Ca(2+)-dependent manner. Interacts with TUNAR. Interacts with FLVCR2; this interaction occurs in the absence of heme and promotes ATP2A2 proteasomal degradation; this complex is dissociated upon heme binding. Interacts with FNIP1. Interacts with TRAM2 (via C-terminus). The cofactor is Mg(2+). Post-translationally, nitrated under oxidative stress. Nitration on the two tyrosine residues inhibits catalytic activity. In terms of processing, serotonylated on Gln residues by TGM2 in response to hypoxia, leading to its inactivation. Isoform 2 is highly expressed in heart and slow twitch skeletal muscle. Isoform 1 is widely expressed.

It localises to the endoplasmic reticulum membrane. It is found in the sarcoplasmic reticulum membrane. It carries out the reaction Ca(2+)(in) + ATP + H2O = Ca(2+)(out) + ADP + phosphate + H(+). Has different conformational states with differential Ca2+ affinity. The E1 conformational state (active form) shows high Ca(2+) affinity, while the E2 state exhibits low Ca(2+) affinity. Binding of ATP allosterically increases its affinity for subsequent binding of Ca2+. Reversibly inhibited by phospholamban (PLN) at low calcium concentrations. PLN inhibits ATP2A2 Ca(2+) affinity by disrupting its allosteric activation by ATP. Inhibited by sarcolipin (SLN) and myoregulin (MRLN). The inhibition is blocked by VMP1. Enhanced by STRIT1/DWORF; STRIT1 increases activity by displacing sarcolipin (SLN), phospholamban (PLN) and myoregulin (MRLN). Stabilizes SERCA2 in its E2 state. This magnesium-dependent enzyme catalyzes the hydrolysis of ATP coupled with the translocation of calcium from the cytosol to the sarcoplasmic reticulum lumen. Involved in autophagy in response to starvation. Upon interaction with VMP1 and activation, controls ER-isolation membrane contacts for autophagosome formation. Also modulates ER contacts with lipid droplets, mitochondria and endosomes. In coordination with FLVCR2 mediates heme-stimulated switching from mitochondrial ATP synthesis to thermogenesis. In terms of biological role, involved in the regulation of the contraction/relaxation cycle. Acts as a regulator of TNFSF11-mediated Ca(2+) signaling pathways via its interaction with TMEM64 which is critical for the TNFSF11-induced CREB1 activation and mitochondrial ROS generation necessary for proper osteoclast generation. Association between TMEM64 and SERCA2 in the ER leads to cytosolic Ca(2+) spiking for activation of NFATC1 and production of mitochondrial ROS, thereby triggering Ca(2+) signaling cascades that promote osteoclast differentiation and activation. The protein is Sarcoplasmic/endoplasmic reticulum calcium ATPase 2 (Atp2a2) of Rattus norvegicus (Rat).